Consider the following 606-residue polypeptide: V-type proton ATPase catalytic subunit A (606 aa).

A2 carries the post-translational modification N-acetylalanine. 240–247 (AFGCGKTV) lines the ATP pocket.

This sequence belongs to the ATPase alpha/beta chains family. As to quaternary structure, V-ATPase is a heteromultimeric enzyme made up of two complexes: the ATP-hydrolytic V1 complex and the proton translocation V0 complex. The V1 complex consists of three catalytic AB heterodimers that form a heterohexamer, three peripheral stalks each consisting of EG heterodimers, one central rotor including subunits D and F, and the regulatory subunits C and H. The proton translocation complex V0 consists of the proton transport subunit a, a ring of proteolipid subunits c9c'', rotary subunit d, subunits e and f, and the accessory subunits vah-19/Ac45 and vah-20/PRR. In terms of tissue distribution, expressed in proximal but not distal germ cells.

It catalyses the reaction ATP + H2O + 4 H(+)(in) = ADP + phosphate + 5 H(+)(out). ATP hydrolysis occurs at the interface between the nucleotide-binding domains of subunits A and B. ATP hydrolysis triggers a conformational change in the subunits D and F, which induces a shift of subunit d. The c-ring is subsequently rotated and results in a continuous proton translocation across the membrane. Functionally, catalytic subunit of the V1 complex of vacuolar(H+)-ATPase (V-ATPase), a multisubunit enzyme composed of a peripheral complex (V1) that hydrolyzes ATP and a membrane integral complex (V0) that translocates protons. V-ATPase is responsible for acidifying and maintaining the pH of intracellular compartments and in some cell types, is targeted to the plasma membrane, where it is responsible for acidifying the extracellular environment. Required along with other vacuolar ATPase components for the removal of protein aggregates which form in immature oocytes in the distal gonad. This removal occurs as the oocytes mature and move to the proximal gonad, is triggered by the introduction of sperm through mating and occurs before fertilization. The introduction of sperm triggers V-ATPase accumulation in proximal oocytes and induces lysosomal acidification which leads to engulfing of protein aggregates by lysosomes and subsequent clearance of the aggregates. Lysosomal acidification also leads to changes in mitochondrial morphology and function. Mitochondria in distal immature oocytes are fragmented, produce high levels of reactive oxygen species (ROS) and have high membrane potential, indicative of metabolic inactivity. In contrast, mitochondria in proximal mature oocytes are tubular with lower ROS levels and membrane potential, indicative of an active metabolic state required for aggregate mobilization before clearance. Involved in receptor-mediated endocytosis. The polypeptide is V-type proton ATPase catalytic subunit A (Caenorhabditis elegans).